Reading from the N-terminus, the 491-residue chain is Stromelysin-3 (491 aa).

The first 35 residues, 1-35, serve as a signal peptide directing secretion; that stretch reads MARAACLLRAISRALLLPLPLLLLLLLLLPPQLMA. The propeptide at 36–101 is activation peptide; sequence RARPPENHRH…VLNARNRQKR (66 aa). Positions 82 to 89 match the Cysteine switch motif; the sequence is LRCGVPDP. Residues cysteine 84, histidine 168, and aspartate 170 each coordinate Zn(2+). Aspartate 175, glycine 176, glycine 178, and isoleucine 180 together coordinate Ca(2+). The Zn(2+) site is built by histidine 183, histidine 196, and histidine 218. Residue glutamate 219 is part of the active site. Residues histidine 222 and histidine 228 each coordinate Zn(2+). The segment at 260–279 is disordered; it reads YGRPQLTPTSPTPTLSSQAG. Residues 263-277 are compositionally biased toward low complexity; it reads PQLTPTSPTPTLSSQ. Cysteine 297 and cysteine 483 are disulfide-bonded. Hemopexin repeat units lie at residues 298 to 342, 343 to 385, 387 to 435, and 436 to 483; these read ETSF…WQGL, PSPV…KLGL, GSPV…WRGV, and PSEI…FFDC.

This sequence belongs to the peptidase M10A family. Requires Ca(2+) as cofactor. The cofactor is Zn(2+). The precursor is cleaved by a furin endopeptidase. In terms of tissue distribution, highly expressed in ovary and uterus.

The protein localises to the secreted. Its subcellular location is the extracellular space. It localises to the extracellular matrix. In terms of biological role, may play an important role in the progression of epithelial malignancies. The sequence is that of Stromelysin-3 (Mmp11) from Rattus norvegicus (Rat).